Consider the following 133-residue polypeptide: MSLTTDPVADFLSRVRNAIKARHQKVDAPASKLKTELARILKEEGYIANYKAVEEEGKKLIRVYLKYGSDNVSPISNVTRISRPGCRVYVGSKEIPRVLGGLGISILTTPKGVMTGRQARKEGVGGEVLCEIY.

It belongs to the universal ribosomal protein uS8 family. In terms of assembly, part of the 30S ribosomal subunit. Contacts proteins S5 and S12.

One of the primary rRNA binding proteins, it binds directly to 16S rRNA central domain where it helps coordinate assembly of the platform of the 30S subunit. This chain is Small ribosomal subunit protein uS8, found in Koribacter versatilis (strain Ellin345).